Consider the following 146-residue polypeptide: D-aminoacyl-tRNA deacylase (146 aa).

The Gly-cisPro motif, important for rejection of L-amino acids motif lies at 137-138; sequence GP.

The protein belongs to the DTD family. Homodimer.

The protein localises to the cytoplasm. The enzyme catalyses glycyl-tRNA(Ala) + H2O = tRNA(Ala) + glycine + H(+). The catalysed reaction is a D-aminoacyl-tRNA + H2O = a tRNA + a D-alpha-amino acid + H(+). An aminoacyl-tRNA editing enzyme that deacylates mischarged D-aminoacyl-tRNAs. Also deacylates mischarged glycyl-tRNA(Ala), protecting cells against glycine mischarging by AlaRS. Acts via tRNA-based rather than protein-based catalysis; rejects L-amino acids rather than detecting D-amino acids in the active site. By recycling D-aminoacyl-tRNA to D-amino acids and free tRNA molecules, this enzyme counteracts the toxicity associated with the formation of D-aminoacyl-tRNA entities in vivo and helps enforce protein L-homochirality. The sequence is that of D-aminoacyl-tRNA deacylase from Hahella chejuensis (strain KCTC 2396).